The sequence spans 467 residues: Dimethylamine methyltransferase MtbB1 (467 aa).

A non-standard amino acid (pyrrolysine) is located at residue Pyl-356.

It belongs to the dimethylamine methyltransferase family.

The enzyme catalyses Co(I)-[dimethylamine-specific corrinoid protein] + dimethylamine + H(+) = methyl-Co(III)-[dimethylamine-specific corrinoid protein] + methylamine. The protein operates within one-carbon metabolism; methanogenesis from dimethylamine. Catalyzes the transfer of a methyl group from dimethylamine to the corrinoid cofactor of MtbC. The chain is Dimethylamine methyltransferase MtbB1 (mtbB1) from Methanosarcina barkeri (strain Fusaro / DSM 804).